Here is a 564-residue protein sequence, read N- to C-terminus: Phomacin cluster regulator phmR (564 aa).

The zn(2)-C6 fungal-type DNA-binding region spans 33–64 (CDRCRGHKLRCIRDQMTVDSPCQRCRKAREKC). Disordered regions lie at residues 68 to 93 (SSTR…TSSA), 152 to 197 (DFAD…NPFL), and 252 to 278 (PIHP…DSTT). 2 stretches are compositionally biased toward polar residues: residues 182-192 (ITPTSQGTTAV) and 258-278 (MASS…DSTT).

The protein resides in the nucleus. Transcription factor that specifically regulates the expression of the gene cluster that mediates the biosynthesis of the mycotoxins phomacins, leucine-derived cytochalasans with potent actin polymerization-inhibitory activities and monocot-specific antigerminative activities. This chain is Phomacin cluster regulator phmR, found in Phaeosphaeria nodorum (strain SN15 / ATCC MYA-4574 / FGSC 10173) (Glume blotch fungus).